The sequence spans 218 residues: tRNA (guanine-N(7)-)-methyltransferase (218 aa).

4 residues coordinate S-adenosyl-L-methionine: glutamate 45, glutamate 70, aspartate 97, and aspartate 119. Aspartate 119 is a catalytic residue. Lysine 123 provides a ligand contact to substrate. Residues 125-130 (RHEKRR) form an interaction with RNA region. Residues aspartate 155 and 195-198 (TEYE) each bind substrate.

Belongs to the class I-like SAM-binding methyltransferase superfamily. TrmB family.

The enzyme catalyses guanosine(46) in tRNA + S-adenosyl-L-methionine = N(7)-methylguanosine(46) in tRNA + S-adenosyl-L-homocysteine. It participates in tRNA modification; N(7)-methylguanine-tRNA biosynthesis. In terms of biological role, catalyzes the formation of N(7)-methylguanine at position 46 (m7G46) in tRNA. The polypeptide is tRNA (guanine-N(7)-)-methyltransferase (Lactobacillus acidophilus (strain ATCC 700396 / NCK56 / N2 / NCFM)).